Consider the following 167-residue polypeptide: Biogenesis of lysosome-related organelles complex 1 subunit 6 (167 aa).

Polar residues predominate over residues 1–11 (MLKSSNINSVL). Residues 1 to 38 (MLKSSNINSVLNELPNDPARDSTAQSSHNGKPKQDAET) form a disordered region. Residues 102–160 (ARLNDMMSDVKRYKDKLTKIKKEMQGVYQRTKELKKRAANVAACKQRDYQRKLERLQHE) are a coiled coil.

The protein belongs to the BLOC1S6 family. As to quaternary structure, component of the biogenesis of lysosome-related organelles complex-1 (BLOC-1) composed of Blos1, Blos2, Blos3, Blos4, Dysb, Muted, Pldn and Snapin. Interacts with Blos1, Blos4 and Dysb.

It localises to the synapse. The protein resides in the cytoplasm. Its subcellular location is the cytoskeleton. It is found in the myofibril. The protein localises to the sarcomere. It localises to the z line. Component of the biogenesis of lysosome-related organelles complex-1 (BLOC-1) involved in pigment granule biogenesis and membrane trafficking in synapses. In response to high synaptic activity at neuromuscular junctions, plays a key role in promoting efficient synaptic vesicle recycling and re-formation through early endosomes. The chain is Biogenesis of lysosome-related organelles complex 1 subunit 6 from Drosophila melanogaster (Fruit fly).